Consider the following 264-residue polypeptide: Occludin/ELL domain-containing protein 1 (264 aa).

Residues 1–10 (MHNPDGSASP) show a composition bias toward polar residues. The interval 1 to 112 (MHNPDGSASP…QPGPHKAKTK (112 aa)) is disordered. The segment covering 96-105 (PRPPCQPQPG) has biased composition (pro residues). An OCEL domain is found at 147-257 (PDYELKYPPV…QIQKFDDQGD (111 aa)).

Belongs to the ELL/occludin family.

The polypeptide is Occludin/ELL domain-containing protein 1 (OCEL1) (Homo sapiens (Human)).